A 508-amino-acid chain; its full sequence is Light-independent protochlorophyllide reductase subunit B (508 aa).

Asp36 is a [4Fe-4S] cluster binding site. Asp294 serves as the catalytic Proton donor. 429-430 provides a ligand contact to substrate; the sequence is GM.

Belongs to the ChlB/BchB/BchZ family. Protochlorophyllide reductase is composed of three subunits; ChlL, ChlN and ChlB. Forms a heterotetramer of two ChlB and two ChlN subunits. [4Fe-4S] cluster serves as cofactor.

The catalysed reaction is chlorophyllide a + oxidized 2[4Fe-4S]-[ferredoxin] + 2 ADP + 2 phosphate = protochlorophyllide a + reduced 2[4Fe-4S]-[ferredoxin] + 2 ATP + 2 H2O. Its pathway is porphyrin-containing compound metabolism; chlorophyll biosynthesis (light-independent). Its function is as follows. Component of the dark-operative protochlorophyllide reductase (DPOR) that uses Mg-ATP and reduced ferredoxin to reduce ring D of protochlorophyllide (Pchlide) to form chlorophyllide a (Chlide). This reaction is light-independent. The NB-protein (ChlN-ChlB) is the catalytic component of the complex. This is Light-independent protochlorophyllide reductase subunit B from Crocosphaera subtropica (strain ATCC 51142 / BH68) (Cyanothece sp. (strain ATCC 51142)).